Reading from the N-terminus, the 288-residue chain is Elongation factor Ts (288 aa).

The involved in Mg(2+) ion dislocation from EF-Tu stretch occupies residues 82-85; the sequence is TDFV.

It belongs to the EF-Ts family.

It is found in the cytoplasm. Its function is as follows. Associates with the EF-Tu.GDP complex and induces the exchange of GDP to GTP. It remains bound to the aminoacyl-tRNA.EF-Tu.GTP complex up to the GTP hydrolysis stage on the ribosome. This chain is Elongation factor Ts, found in Chlorobium limicola (strain DSM 245 / NBRC 103803 / 6330).